Consider the following 98-residue polypeptide: uncharacterized protein (98 aa).

Basic residues predominate over residues 19–31 (RRMSKRSKNKAKK). Residues 19-47 (RRMSKRSKNKAKKERVPVEDRPPTPMPTS) form a disordered region.

The protein belongs to the lymphocryptovirus BNLF2B family.

This is an uncharacterized protein from Epstein-Barr virus (strain AG876) (HHV-4).